The primary structure comprises 368 residues: 1-deoxy-D-xylulose 5-phosphate reductoisomerase (368 aa).

NADPH contacts are provided by Thr-7, Gly-8, Ser-9, Ile-10, Gly-31, Lys-32, Asn-33, and Asn-113. Lys-114 contributes to the 1-deoxy-D-xylulose 5-phosphate binding site. Glu-115 is an NADPH binding site. Asp-133 contacts Mn(2+). Positions 134, 135, 158, and 181 each coordinate 1-deoxy-D-xylulose 5-phosphate. Glu-135 is a binding site for Mn(2+). NADPH is bound at residue Gly-187. 1-deoxy-D-xylulose 5-phosphate contacts are provided by Ser-194, Asn-199, Lys-200, and Glu-203. Glu-203 is a Mn(2+) binding site.

This sequence belongs to the DXR family. Mg(2+) serves as cofactor. Mn(2+) is required as a cofactor.

The catalysed reaction is 2-C-methyl-D-erythritol 4-phosphate + NADP(+) = 1-deoxy-D-xylulose 5-phosphate + NADPH + H(+). It participates in isoprenoid biosynthesis; isopentenyl diphosphate biosynthesis via DXP pathway; isopentenyl diphosphate from 1-deoxy-D-xylulose 5-phosphate: step 1/6. Functionally, catalyzes the NADPH-dependent rearrangement and reduction of 1-deoxy-D-xylulose-5-phosphate (DXP) to 2-C-methyl-D-erythritol 4-phosphate (MEP). This Helicobacter pylori (strain Shi470) protein is 1-deoxy-D-xylulose 5-phosphate reductoisomerase.